The following is a 435-amino-acid chain: Tryptophan--tRNA ligase (435 aa).

Residues 10–12 and 18–19 contribute to the ATP site; these read TTS and GN. The 'HIGH' region motif lies at 11-19; that stretch reads TSGTPHLGN. Residue Asp143 participates in L-tryptophan binding. ATP contacts are provided by residues 155 to 157, Leu195, and 202 to 206; these read GRD and KMSKS. Positions 202-206 match the 'KMSKS' region motif; the sequence is KMSKS.

The protein belongs to the class-I aminoacyl-tRNA synthetase family. In terms of assembly, homodimer.

The protein localises to the cytoplasm. It carries out the reaction tRNA(Trp) + L-tryptophan + ATP = L-tryptophyl-tRNA(Trp) + AMP + diphosphate + H(+). In terms of biological role, catalyzes the attachment of tryptophan to tRNA(Trp). The polypeptide is Tryptophan--tRNA ligase (Xylella fastidiosa (strain Temecula1 / ATCC 700964)).